We begin with the raw amino-acid sequence, 316 residues long: Tetrahydromethanopterin S-methyltransferase subunit H (316 aa).

Belongs to the MtrH family. As to quaternary structure, the complex is composed of 8 subunits; MtrA, MtrB, MtrC, MtrD, MtrE, MtrF, MtrG and MtrH.

It catalyses the reaction 5-methyl-5,6,7,8-tetrahydromethanopterin + coenzyme M + 2 Na(+)(in) = 5,6,7,8-tetrahydromethanopterin + methyl-coenzyme M + 2 Na(+)(out). It functions in the pathway one-carbon metabolism; methanogenesis from CO(2); methyl-coenzyme M from 5,10-methylene-5,6,7,8-tetrahydromethanopterin: step 2/2. Its function is as follows. Part of a complex that catalyzes the formation of methyl-coenzyme M and tetrahydromethanopterin from coenzyme M and methyl-tetrahydromethanopterin. This is an energy-conserving, sodium-ion translocating step. MtrH catalyzes the transfer of the methyl group from methyl-tetrahydromethanopterin to the corrinoid prosthetic group of MtrA. The protein is Tetrahydromethanopterin S-methyltransferase subunit H of Methanosarcina acetivorans (strain ATCC 35395 / DSM 2834 / JCM 12185 / C2A).